Consider the following 302-residue polypeptide: Glycine--tRNA ligase alpha subunit (302 aa).

This sequence belongs to the class-II aminoacyl-tRNA synthetase family. In terms of assembly, tetramer of two alpha and two beta subunits.

It is found in the cytoplasm. The catalysed reaction is tRNA(Gly) + glycine + ATP = glycyl-tRNA(Gly) + AMP + diphosphate. This is Glycine--tRNA ligase alpha subunit from Haemophilus influenzae (strain 86-028NP).